The following is a 557-amino-acid chain: Potassium-transporting ATPase potassium-binding subunit (557 aa).

12 helical membrane passes run 5 to 25 (GFLL…PLGS), 63 to 83 (LCAI…MLLG), 132 to 152 (GLTV…FALI), 170 to 190 (LLRI…LFFI), 253 to 273 (FVQM…FGEV), 283 to 303 (LLWA…WAEV), 329 to 349 (VLVS…AVIA), 356 to 376 (ALGG…FGGV), 379 to 399 (GLYG…LMIG), 416 to 436 (LTAL…ALAM), 484 to 504 (LLAF…MAIA), and 526 to 546 (LFVG…FIPA).

This sequence belongs to the KdpA family. The system is composed of three essential subunits: KdpA, KdpB and KdpC.

Its subcellular location is the cell inner membrane. Part of the high-affinity ATP-driven potassium transport (or Kdp) system, which catalyzes the hydrolysis of ATP coupled with the electrogenic transport of potassium into the cytoplasm. This subunit binds the periplasmic potassium ions and delivers the ions to the membrane domain of KdpB through an intramembrane tunnel. The chain is Potassium-transporting ATPase potassium-binding subunit from Escherichia coli O157:H7.